Consider the following 176-residue polypeptide: Probable DNA-directed RNA polymerase subunit delta (176 aa).

Residues 14-81 (KSFIDMAYTL…GENLWGLRDW (68 aa)) enclose the HTH HARE-type domain. The disordered stretch occupies residues 114–176 (LGEDEMDDDD…VFEDEEDFND (63 aa)). Acidic residues-rich tracts occupy residues 116 to 145 (EDEM…QVEE) and 153 to 176 (VIEE…DFND).

Belongs to the RpoE family. RNAP is composed of a core of 2 alpha, a beta and a beta' subunits. The core is associated with a delta subunit and one of several sigma factors.

Its function is as follows. Participates in both the initiation and recycling phases of transcription. In the presence of the delta subunit, RNAP displays an increased specificity of transcription, a decreased affinity for nucleic acids, and an increased efficiency of RNA synthesis because of enhanced recycling. In Staphylococcus aureus (strain JH1), this protein is Probable DNA-directed RNA polymerase subunit delta.